We begin with the raw amino-acid sequence, 108 residues long: Nucleoid-associated protein mma_2329 (108 aa).

It belongs to the YbaB/EbfC family. Homodimer.

The protein localises to the cytoplasm. It is found in the nucleoid. Binds to DNA and alters its conformation. May be involved in regulation of gene expression, nucleoid organization and DNA protection. This chain is Nucleoid-associated protein mma_2329, found in Janthinobacterium sp. (strain Marseille) (Minibacterium massiliensis).